We begin with the raw amino-acid sequence, 644 residues long: Chaperone protein DnaK (644 aa).

A Phosphothreonine; by autocatalysis modification is found at threonine 199. The span at alanine 550–arginine 584 shows a compositional bias: basic and acidic residues. Disordered regions lie at residues alanine 550–serine 586 and tyrosine 599–lysine 644. Positions serine 600 to glycine 623 are enriched in low complexity.

The protein belongs to the heat shock protein 70 family.

Acts as a chaperone. The sequence is that of Chaperone protein DnaK from Leptospira biflexa serovar Patoc (strain Patoc 1 / Ames).